Reading from the N-terminus, the 218-residue chain is Deoxyribose-phosphate aldolase (218 aa).

Residue Asp-89 is the Proton donor/acceptor of the active site. Lys-152 functions as the Schiff-base intermediate with acetaldehyde in the catalytic mechanism. The Proton donor/acceptor role is filled by Lys-182.

This sequence belongs to the DeoC/FbaB aldolase family. DeoC type 1 subfamily.

It is found in the cytoplasm. It carries out the reaction 2-deoxy-D-ribose 5-phosphate = D-glyceraldehyde 3-phosphate + acetaldehyde. Its pathway is carbohydrate degradation; 2-deoxy-D-ribose 1-phosphate degradation; D-glyceraldehyde 3-phosphate and acetaldehyde from 2-deoxy-alpha-D-ribose 1-phosphate: step 2/2. Catalyzes a reversible aldol reaction between acetaldehyde and D-glyceraldehyde 3-phosphate to generate 2-deoxy-D-ribose 5-phosphate. In Corynebacterium diphtheriae (strain ATCC 700971 / NCTC 13129 / Biotype gravis), this protein is Deoxyribose-phosphate aldolase.